A 607-amino-acid chain; its full sequence is UvrABC system protein C (607 aa).

The GIY-YIG domain maps to G16–I94. Residues N203 to V238 form the UVR domain.

Belongs to the UvrC family. Interacts with UvrB in an incision complex.

It is found in the cytoplasm. Functionally, the UvrABC repair system catalyzes the recognition and processing of DNA lesions. UvrC both incises the 5' and 3' sides of the lesion. The N-terminal half is responsible for the 3' incision and the C-terminal half is responsible for the 5' incision. The sequence is that of UvrABC system protein C from Pseudomonas savastanoi pv. phaseolicola (strain 1448A / Race 6) (Pseudomonas syringae pv. phaseolicola (strain 1448A / Race 6)).